The following is a 46-amino-acid chain: uncharacterized protein (46 aa).

A helical transmembrane segment spans residues 20–42; it reads MAMIWVVAALVIALVVGTALNYI.

It localises to the membrane. This is an uncharacterized protein from Bacillus subtilis (strain 168).